The chain runs to 343 residues: Membrane progestin receptor delta (343 aa).

Over 1-49 (MLSLKMPQLLRVHQVPRVFWEEGIMSGYRCPTSSALDCVLSSFQMTNET) the chain is Cytoplasmic. Residues 50–70 (VNIWTHFLPTWYFLWRLLALG) form a helical membrane-spanning segment. The Extracellular portion of the chain corresponds to 71–79 (SPGFRADPY). The helical transmembrane segment at 80–100 (HLPLLVFLLPACLYPFASCCA) threads the bilayer. The Cytoplasmic portion of the chain corresponds to 101 to 112 (HTFSSMSPRARH). Residues 113 to 133 (ICYFLDYGALSLYSLGCAFPY) traverse the membrane as a helical segment. Residues 134-146 (AAYSMPASWLHSR) are Extracellular-facing. A helical membrane pass occupies residues 147-167 (LHQLFVPAAALNSFLCTGLSC). The Cytoplasmic segment spans residues 168–216 (YSRFPELEYPGFSKALRTAAFAYPFLFDNLPLFYRLRLCWGGAHSCGRD). Residues 217-237 (ALSSNHGYHLLCALLSGFLFA) traverse the membrane as a helical segment. The Extracellular segment spans residues 238–257 (ARLPERLAPGRFDYIGHSHQ). Residues 258–278 (LFHICAVLGTHFQLEAVLADM) traverse the membrane as a helical segment. Topologically, residues 279–291 (GSRRAWLAVQEPT) are cytoplasmic. The helical transmembrane segment at 292-312 (LGLGATVATLSLAVIGNLFII) threads the bilayer. The Extracellular segment spans residues 313-343 (AAFTASLLRMPGPCPLLQGSPLEEGLQAKQQ).

This sequence belongs to the ADIPOR family. In terms of assembly, homodimer.

Its subcellular location is the cell membrane. Its function is as follows. Plasma membrane progesterone (P4) receptor coupled to G proteins. Seems to act through a G(s) mediated pathway. Involved in neurosteroid inhibition of apoptosis. May be involved in regulating rapid P4 signaling in the nervous system. Also binds dehydroepiandrosterone (DHEA), pregnanolone, pregnenolone and allopregnanolone. This Mus musculus (Mouse) protein is Membrane progestin receptor delta.